The following is a 424-amino-acid chain: Adenosylmethionine-8-amino-7-oxononanoate aminotransferase (424 aa).

Residue Trp46 coordinates substrate. 106 to 107 (GS) is a binding site for pyridoxal 5'-phosphate. Tyr138 contacts substrate. Asp240 lines the pyridoxal 5'-phosphate pocket. Substrate contacts are provided by Lys269 and Gly303. An N6-(pyridoxal phosphate)lysine modification is found at Lys269. 304–305 (HS) is a pyridoxal 5'-phosphate binding site. Arg391 is a substrate binding site.

Belongs to the class-III pyridoxal-phosphate-dependent aminotransferase family. BioA subfamily. In terms of assembly, homodimer. The cofactor is pyridoxal 5'-phosphate.

The protein resides in the cytoplasm. The enzyme catalyses (8S)-8-amino-7-oxononanoate + S-adenosyl-L-methionine = S-adenosyl-4-methylsulfanyl-2-oxobutanoate + (7R,8S)-7,8-diammoniononanoate. It participates in cofactor biosynthesis; biotin biosynthesis; 7,8-diaminononanoate from 8-amino-7-oxononanoate (SAM route): step 1/1. Its function is as follows. Catalyzes the transfer of the alpha-amino group from S-adenosyl-L-methionine (SAM) to 7-keto-8-aminopelargonic acid (KAPA) to form 7,8-diaminopelargonic acid (DAPA). It is the only aminotransferase known to utilize SAM as an amino donor. Complements a bioU deletion in Synechocystis PCC 6803. The polypeptide is Adenosylmethionine-8-amino-7-oxononanoate aminotransferase (Synechococcus elongatus (strain ATCC 33912 / PCC 7942 / FACHB-805) (Anacystis nidulans R2)).